A 302-amino-acid polypeptide reads, in one-letter code: Actin maturation protease (302 aa).

The interval 1–26 is disordered; sequence MPHTNEDPTAQQAGVILDPPPPLPPP. The interval 85–205 is peptidase C39-like; it reads SLIQEGPQCG…WAVISGVLFG (121 aa). C93 is a catalytic residue.

It belongs to the ACTMAP family.

The protein localises to the cytoplasm. It catalyses the reaction N-terminal N(alpha)-acetyl-L-methionyl-L-aspartyl-[protein] + H2O = N-terminal L-aspartyl-[protein] + N-acetyl-L-methionine. It carries out the reaction N-terminal N(alpha)-acetyl-L-methionyl-L-glutamyl-[protein] + H2O = N-terminal L-glutamyl-[protein] + N-acetyl-L-methionine. The enzyme catalyses N-terminal N(alpha)-acetyl-L-cysteinyl-L-aspartyl-[protein] + H2O = N-terminal L-aspartyl-[protein] + N-acetyl-L-cysteine. The catalysed reaction is N-terminal N(alpha)-acetyl-L-cysteinyl-L-glutamyl-[protein] + H2O = N-terminal L-glutamyl-[protein] + N-acetyl-L-cysteine. Its function is as follows. Actin maturation protease that specifically mediates the cleavage of immature acetylated N-terminal actin, thereby contributing to actin maturation. Cleaves N-terminal acetylated methionine of immature cytoplasmic beta- and gamma-actin after translation. Cleaves N-terminal acetylated cysteine of muscle alpha-actin after canonical removal of N-terminal methionine. In Xenopus tropicalis (Western clawed frog), this protein is Actin maturation protease.